An 80-amino-acid polypeptide reads, in one-letter code: Cytochrome c-553 (80 aa).

Heme c is bound by residues C13, C16, H17, and M58.

Binds 1 heme c group covalently per subunit.

The protein localises to the periplasm. Natural electron acceptor for a formate dehydrogenase. This chain is Cytochrome c-553, found in Desulfomicrobium norvegicum (strain DSM 1741 / NCIMB 8310) (Desulfovibrio baculatus (strain Norway 4)).